Here is a 156-residue protein sequence, read N- to C-terminus: DNA mismatch endonuclease Vsr (156 aa).

Positions 51 and 63 each coordinate Mg(2+).

Belongs to the Vsr family. Mg(2+) serves as cofactor. It depends on Zn(2+) as a cofactor.

Its function is as follows. Deamination of 5-methylcytosine in DNA results in T/G mismatches. If unrepaired, these mismatches can lead to C-to-T transition mutations. The very short patch (VSP) repair process in E.coli counteracts the mutagenic process by repairing the mismatches in favor of the G-containing strand. This enzyme is an endonuclease that nicks double-stranded DNA within the sequence CT(AT)GN or NT(AT)GG next to the thymidine residue that is mismatched to 2'-deoxyguanosine. The incision is mismatch-dependent and strand-specific. The polypeptide is DNA mismatch endonuclease Vsr (Escherichia coli (strain K12)).